Reading from the N-terminus, the 228-residue chain is Prepilin leader peptidase/N-methyltransferase (228 aa).

6 consecutive transmembrane segments (helical) span residues 18-38 (LWGS…NVVI), 95-115 (RYPL…YLMA), 116-136 (PGVP…LAAI), 147-167 (LTLP…YVPL), 168-188 (AEAV…YWVF), and 204-224 (LLAA…LLLA).

This sequence belongs to the peptidase A24 family.

It is found in the cell inner membrane. The enzyme catalyses Typically cleaves a -Gly-|-Phe- bond to release an N-terminal, basic peptide of 5-8 residues from type IV prepilin, and then N-methylates the new N-terminal amino group, the methyl donor being S-adenosyl-L-methionine.. Its function is as follows. Plays an essential role in type IV pili and type II pseudopili formation by proteolytically removing the leader sequence from substrate proteins and subsequently monomethylating the alpha-amino group of the newly exposed N-terminal phenylalanine. This Klebsiella pneumoniae protein is Prepilin leader peptidase/N-methyltransferase (pulO).